The chain runs to 1355 residues: Probable major glycoprotein (1355 aa).

Positions 1-16 (MKKTMLAIILIPLVYA) are cleaved as a signal peptide. Asn-81, Asn-112, Asn-129, Asn-169, Asn-173, Asn-192, Asn-542, Asn-655, Asn-682, Asn-744, Asn-780, Asn-811, Asn-815, Asn-860, Asn-865, Asn-882, Asn-895, Asn-1213, Asn-1225, Asn-1267, and Asn-1274 each carry an N-linked (GlcNAc...) asparagine; by host glycan. Positions 1245-1299 (QIVSMEMEIQDLKLELIQLQKINTSVHMENITGDIDAMKATIEEYRAEMAKLRVT) form a coiled coil. A helical transmembrane segment spans residues 1308 to 1328 (FIYAILGVIAIGALIAIIFMA).

Its subcellular location is the host membrane. The chain is Probable major glycoprotein (ORF46) from Ictaluridae (bullhead catfishes).